A 521-amino-acid polypeptide reads, in one-letter code: Pentatricopeptide repeat-containing protein At4g26680, mitochondrial (521 aa).

Residues 1–38 (MIRISIGVNRRLRYQFSSFAGYSGSENPRLFKTLGAAN) constitute a mitochondrion transit peptide. PPR repeat units follow at residues 167 to 201 (TPRV…GFLP), 202 to 236 (TVES…KISP), 237 to 271 (NPYT…GFRA), 272 to 306 (TDVS…GLQP), 307 to 341 (NVVT…NVAP), 342 to 376 (NTVT…GIQR), 377 to 411 (DILT…NLVP), 412 to 446 (NSST…GCHP), 447 to 481 (NEQT…SIPL), and 482 to 516 (DSRT…KFLQ).

Belongs to the PPR family. P subfamily.

It is found in the mitochondrion. In Arabidopsis thaliana (Mouse-ear cress), this protein is Pentatricopeptide repeat-containing protein At4g26680, mitochondrial.